Here is a 648-residue protein sequence, read N- to C-terminus: 60 kDa heat shock protein homolog 1, mitochondrial (648 aa).

A mitochondrion-targeting transit peptide spans 1-55 (MFRSCVPKAITSSRCFARMYSKDVRFGSGVRAMMIRGVDILADAVAVTMGPKGRS).

The protein belongs to the chaperonin (HSP60) family.

The protein localises to the mitochondrion matrix. In terms of biological role, prevents misfolding and promotes the refolding and proper assembly of unfolded polypeptides generated under stress conditions. In Drosophila melanogaster (Fruit fly), this protein is 60 kDa heat shock protein homolog 1, mitochondrial (Hsp60B).